The sequence spans 1447 residues: Inositol 1,4,5-triphosphate receptor associated 2 (1447 aa).

The Cytoplasmic segment spans residues 1–1388 (MDVGVTPRRH…RPAVSRGARG (1388 aa)). Disordered stretches follow at residues 64–96 (VRPDDSDSASSAGMLTPTASPGPGSSCNTPRAP) and 420–439 (LSLTSSEESRAQAAAQRKQM). Positions 71-92 (SASSAGMLTPTASPGPGSSCNT) are enriched in polar residues. Coiled coils occupy residues 354-518 (FCVA…EYSS) and 665-731 (TDWI…DNRE). Positions 420–436 (LSLTSSEESRAQAAAQR) are enriched in low complexity. 5 disordered regions span residues 790 to 828 (KQEEEEPTETVSDKEKITAKSEGEGEATYDSGVENEEPQ), 841 to 860 (KKSERESNEAPFVGEGGEQR), 991 to 1132 (PVAE…SPSD), 1267 to 1289 (NERSFGSHSERDDFRNKKQTTSN), and 1355 to 1379 (DEPTLMNSPTPSPTDNAPPSLMEGR). Positions 800–812 (VSDKEKITAKSEG) are enriched in basic and acidic residues. Polar residues predominate over residues 1021-1035 (KKTVVTSDSNSTGSA). Basic and acidic residues-rich tracts occupy residues 1037 to 1049 (SLKDPSEKVKDMT) and 1080 to 1096 (KKEMSSMEVIEEQKAQE). The interval 1076–1265 (RNKLKKEMSS…ELLELRENLT (190 aa)) is necessary for spindle and spindle pole localization. Residues 1110–1119 (TSVSSENASD) are compositionally biased toward polar residues. Positions 1120–1132 (STKDDKNSLSPSD) are enriched in basic and acidic residues. Polar residues predominate over residues 1359 to 1371 (LMNSPTPSPTDNA). The interval 1388-1447 (GIWIWVALFVVLAVLLALLASLMLQPAVDAAPVGTGDSWMTIQQLLWPYTGLRHNGQPPV) is necessary for nuclear membrane localization. The chain crosses the membrane as a helical; Anchor for type IV membrane protein span at residues 1389–1409 (IWIWVALFVVLAVLLALLASL). Topologically, residues 1410 to 1447 (MLQPAVDAAPVGTGDSWMTIQQLLWPYTGLRHNGQPPV) are lumenal.

The protein belongs to the IRAG2 family.

The protein resides in the endoplasmic reticulum membrane. The protein localises to the nucleus envelope. It localises to the cytoplasm. Its subcellular location is the cytoskeleton. It is found in the microtubule organizing center. The protein resides in the centrosome. The protein localises to the spindle pole. It localises to the chromosome. Functionally, a maternally expressed membrane and cytoskeletal linker protein, which is essential for attachment of the centrosome to the male pronucleus. Promotes male and female pronucleus congression and subsequent fusion after fertilization. Congression is mediated by the sperm aster microtubules. The protein is Inositol 1,4,5-triphosphate receptor associated 2 (irag2) of Danio rerio (Zebrafish).